Reading from the N-terminus, the 172-residue chain is Transcriptional repressor NrdR (172 aa).

Residues 3-34 (CPYCRNTDTRVLDSRVADDGGSIRRRRTCSAC) fold into a zinc finger. Residues 46–136 (LTVLKRSGAS…VYRAFESADD (91 aa)) form the ATP-cone domain.

It belongs to the NrdR family. It depends on Zn(2+) as a cofactor.

Its function is as follows. Negatively regulates transcription of bacterial ribonucleotide reductase nrd genes and operons by binding to NrdR-boxes. The sequence is that of Transcriptional repressor NrdR from Nocardioides sp. (strain ATCC BAA-499 / JS614).